Consider the following 1230-residue polypeptide: Basic-leucine zipper transcription factor A (1230 aa).

Disordered regions lie at residues 65–108, 180–233, 270–310, and 422–578; these read LYLS…NIIN, LNGN…QQHQ, QQLK…PSTQ, and HQQN…RKKD. Composition is skewed to low complexity over residues 69–108, 192–233, 270–287, 295–310, and 422–447; these read NSSNNTNNNNNNNNNNNNNNNNNNNNNNNNNNNNNNNIIN, NNFS…QQHQ, QQLKQQQPQQHPIQSPQP, PSLQQHQTYSYTPSTQ, and HQQNIQQHQNQNQQQLQLPQPQQQQH. 2 stretches are compositionally biased toward polar residues: residues 448-458 and 466-475; these read KSTPPTQNTPP and TPTLTTNGKG. Residues 476–503 show a composition bias toward low complexity; sequence SKSTPPTTTTTTTTTTSSSSSSSSSSSS. Positions 523-537 are enriched in basic residues; sequence PHHHHHHHNNHHHHH. Acidic residues predominate over residues 541-554; sequence FSDENDEEFIDENE. The 64-residue stretch at 555–618 folds into the bZIP domain; sequence DKSKNKSRSS…LGDVMRPDFD (64 aa). Positions 556 to 586 are basic motif; it reads KSKNKSRSSQNIASRNYRQRKKDHISEVEFK. Polar residues predominate over residues 562–571; the sequence is RSSQNIASRN. The leucine-zipper stretch occupies residues 590–604; sequence LSLENERLKQENHLL. The stretch at 728-753 forms a coiled coil; the sequence is LKIDMELRTERDQLDREIKELFLKKI. Disordered stretches follow at residues 772–869 and 1025–1230; these read TFNS…EHNK and NYTN…TPNI. Low complexity-rich tracts occupy residues 774 to 803 and 810 to 831; these read NSESDYPSSPSSASNSSNSPPTSSPTIITP and NNQNNQNNNQMINSNSNNSNNN. Over residues 832–845 the composition is skewed to basic residues; it reads SHHHHHHHHSHLHG. Residues 1025–1042 show a composition bias toward polar residues; it reads NYTNSPLITSSPSQLTPN. Low complexity-rich tracts occupy residues 1052–1146 and 1153–1193; these read NNNN…NNGN and QALH…SPSS.

Belongs to the bZIP family. As to quaternary structure, binds DNA as a dimer. Heterodimerizes with dimB; in vitro. Also able to form homodimer; in vitro.

Its subcellular location is the nucleus. Its function is as follows. Transcriptional regulator involved in DIF-1 signaling. DIF-1 (Differentiation Inducing Factor-1) is a signal molecule involved in the differentiation of pstO (prestalk-O) cells. Functions both as an activator of prestalk gene expression and a repressor of prespore gene expression. This is Basic-leucine zipper transcription factor A (dimA) from Dictyostelium discoideum (Social amoeba).